Reading from the N-terminus, the 83-residue chain is Short neurotoxin OKI-Ed (83 aa).

The first 21 residues, 1–21 (MKTLLLTLVVVTIVCLDLGYT), serve as a signal peptide directing secretion. 4 cysteine pairs are disulfide-bonded: Cys-24–Cys-45, Cys-38–Cys-62, Cys-64–Cys-75, and Cys-76–Cys-81.

It belongs to the three-finger toxin family. Short-chain subfamily. Type I alpha-neurotoxin sub-subfamily. Expressed by the venom gland.

It is found in the secreted. Its function is as follows. Binds to muscle nicotinic acetylcholine receptor (nAChR) and inhibit acetylcholine from binding to the receptor, thereby impairing neuromuscular transmission. The chain is Short neurotoxin OKI-Ed from Laticauda semifasciata (Black-banded sea krait).